Reading from the N-terminus, the 504-residue chain is Maturase K (504 aa).

It belongs to the intron maturase 2 family. MatK subfamily.

It is found in the plastid. The protein localises to the chloroplast. Usually encoded in the trnK tRNA gene intron. Probably assists in splicing its own and other chloroplast group II introns. The chain is Maturase K from Gossypium barbadense (Sea Island cotton).